The sequence spans 266 residues: F-box only protein 50 (266 aa).

A compositionally biased stretch (basic and acidic residues) spans 1-16; that stretch reads MEKTQDRDTLSGRMEA. The segment at 1–53 is disordered; that stretch reads MEKTQDRDTLSGRMEAEGSLNSEELPPHPQSPPPPPSPRSPTSPVTPELPQPN. The segment covering 27–41 has biased composition (pro residues); it reads PHPQSPPPPPSPRSP. A phosphoserine mark is found at Ser31, Ser37, Ser40, and Ser43. Thr46 is subject to Phosphothreonine. The region spanning 86-264 is the FBA domain; sequence LFLERPLYRN…VTDSSVSVQL (179 aa).

In terms of tissue distribution, strongly expressed in kidney. Weakly expressed in stomach, colon, duodenum and prostate.

The protein resides in the cytoplasm. Promotes cell proliferation. The protein is F-box only protein 50 (Nccrp1) of Mus musculus (Mouse).